The chain runs to 289 residues: Homeobox protein engrailed-2 (289 aa).

Composition is skewed to basic and acidic residues over residues 1–12 (MEEGGRSPREEA) and 60–83 (EFGR…ESRR). Disordered stretches follow at residues 1-166 (MEEG…GNQP) and 179-206 (SDRP…PRTA). Positions 96–114 (VPGGGGGGGGGSPGRGEGG) are enriched in gly residues. The segment covering 142–160 (LSGAELSVSSDSDSSQAGS) has biased composition (low complexity). The segment at residues 200-259 (DKRPRTAFTAEQLQRLKAEFQTNRYLTEQRRQSLAQELGLNESQIKIWFQNKRAKIKKAT) is a DNA-binding region (homeobox).

Belongs to the engrailed homeobox family.

The protein localises to the nucleus. This chain is Homeobox protein engrailed-2 (EN2), found in Gallus gallus (Chicken).